Reading from the N-terminus, the 711-residue chain is Polyribonucleotide nucleotidyltransferase (711 aa).

The Mg(2+) site is built by D487 and D493. One can recognise a KH domain in the interval 554 to 613 (PRIHTMKISAEKIKDVIGKGGAVIRALTEETGTTIEIEDDGTIKIAATEGAAAKEAIRRI). In terms of domain architecture, S1 motif spans 623–691 (GRIYTGKVAR…RQGRVRLSMK (69 aa)). Residues 691-711 (KEAVEKPAEEAAAEAPAAKEE) are disordered.

This sequence belongs to the polyribonucleotide nucleotidyltransferase family. As to quaternary structure, component of the RNA degradosome, which is a multiprotein complex involved in RNA processing and mRNA degradation. It depends on Mg(2+) as a cofactor.

The protein resides in the cytoplasm. The catalysed reaction is RNA(n+1) + phosphate = RNA(n) + a ribonucleoside 5'-diphosphate. Its function is as follows. Involved in mRNA degradation. Catalyzes the phosphorolysis of single-stranded polyribonucleotides processively in the 3'- to 5'-direction. The protein is Polyribonucleotide nucleotidyltransferase of Vibrio parahaemolyticus serotype O3:K6 (strain RIMD 2210633).